A 489-amino-acid polypeptide reads, in one-letter code: Glutamyl-tRNA(Gln) amidotransferase subunit A (489 aa).

Residues lysine 75 and serine 150 each act as charge relay system in the active site. Catalysis depends on serine 174, which acts as the Acyl-ester intermediate.

This sequence belongs to the amidase family. GatA subfamily. Heterotrimer of A, B and C subunits.

The catalysed reaction is L-glutamyl-tRNA(Gln) + L-glutamine + ATP + H2O = L-glutaminyl-tRNA(Gln) + L-glutamate + ADP + phosphate + H(+). Functionally, allows the formation of correctly charged Gln-tRNA(Gln) through the transamidation of misacylated Glu-tRNA(Gln) in organisms which lack glutaminyl-tRNA synthetase. The reaction takes place in the presence of glutamine and ATP through an activated gamma-phospho-Glu-tRNA(Gln). The protein is Glutamyl-tRNA(Gln) amidotransferase subunit A of Gloeobacter violaceus (strain ATCC 29082 / PCC 7421).